Here is a 470-residue protein sequence, read N- to C-terminus: Zinc finger and BTB domain-containing protein 8A.1-A (470 aa).

The region spanning 24 to 92 (CDCHIIVEGQ…VYSGKLPLSG (69 aa)) is the BTB domain. Residues 260–280 (EDEDAASHSWPESPQQESLDQ) are disordered. Positions 269-278 (WPESPQQESL) are enriched in polar residues. C2H2-type zinc fingers lie at residues 316-338 (FKCPFCTHTVKRKADLKRHLRCH) and 344-367 (YPCEACGKRFTRLEHLRNHFQTIH). Basic and acidic residues predominate over residues 439 to 450 (GRKENGSERAES). The segment at 439–470 (GRKENGSERAESDLAIQEVVDSEDDELKEKQD) is disordered.

The protein resides in the nucleus. Its function is as follows. May be involved in transcriptional regulation. This is Zinc finger and BTB domain-containing protein 8A.1-A (zbtb8a.1-a) from Xenopus laevis (African clawed frog).